A 289-amino-acid polypeptide reads, in one-letter code: Proteasome assembly chaperone 1 (289 aa).

Residues 1 to 38 (MAATFFGEVVKAPCRAGTEEEEEEEEQSRRDTPEDREV) are disordered. Ala-2 carries the N-acetylalanine modification. The residue at position 18 (Thr-18) is a Phosphothreonine. The segment covering 27-38 (QSRRDTPEDREV) has biased composition (basic and acidic residues). Thr-55 is subject to Phosphothreonine. Ser-181 carries the post-translational modification Phosphoserine. At Lys-265 the chain carries N6-acetyllysine.

It belongs to the PSMG1 family. In terms of assembly, forms a heterodimer with PSMG2. The PSMG1-PSMG2 heterodimer interacts directly with the PSMA5 and PSMA7 proteasome alpha subunits. In terms of processing, degraded by the proteasome upon completion of 20S proteasome maturation. Highly expressed in testis with moderate expression in brain, liver and kidney and low levels in heart, skeletal muscle and pancreas.

Its subcellular location is the cytoplasm. It localises to the endoplasmic reticulum. In terms of biological role, chaperone protein which promotes assembly of the 20S proteasome as part of a heterodimer with PSMG2. The PSMG1-PSMG2 heterodimer binds to the PSMA5 and PSMA7 proteasome subunits, promotes assembly of the proteasome alpha subunits into the heteroheptameric alpha ring and prevents alpha ring dimerization. The protein is Proteasome assembly chaperone 1 of Mus musculus (Mouse).